The sequence spans 354 residues: Inactive ADP-ribosyltransferase ARH2 (354 aa).

Ser-27 carries the phosphoserine modification.

This sequence belongs to the ADP-ribosylglycohydrolase family.

It localises to the cytoplasm. Its subcellular location is the myofibril. It is found in the sarcomere. Required for myofibril assembly and outgrowth of the cardiac chambers in the developing heart. Appears to be catalytically inactive, showing no activity against O-acetyl-ADP-ribose. This is Inactive ADP-ribosyltransferase ARH2 (ADPRHL1) from Homo sapiens (Human).